The following is a 142-amino-acid chain: Transcriptional regulator MraZ (142 aa).

2 SpoVT-AbrB domains span residues 5 to 47 and 76 to 119; these read EYNH…PMEE and ANEI…SREK.

The protein belongs to the MraZ family. In terms of assembly, forms oligomers.

Its subcellular location is the cytoplasm. The protein localises to the nucleoid. This is Transcriptional regulator MraZ from Clostridium tetani (strain Massachusetts / E88).